The primary structure comprises 351 residues: Phospho-N-acetylmuramoyl-pentapeptide-transferase (351 aa).

10 helical membrane-spanning segments follow: residues 17–37 (MAYA…HIIL), 62–82 (GIPT…LVFW), 85–105 (ILNV…FLGF), 130–150 (IIFS…HVSI), 163–183 (LGVF…NSFN), 190–210 (GLAI…AYIT), 230–250 (LVIF…FNAY), 254–274 (IMMG…TALI), 281–301 (FSIL…QVIV), and 328–348 (QVVI…LSTI).

This sequence belongs to the glycosyltransferase 4 family. MraY subfamily. Mg(2+) is required as a cofactor.

The protein resides in the cell inner membrane. It catalyses the reaction UDP-N-acetyl-alpha-D-muramoyl-L-alanyl-gamma-D-glutamyl-meso-2,6-diaminopimeloyl-D-alanyl-D-alanine + di-trans,octa-cis-undecaprenyl phosphate = di-trans,octa-cis-undecaprenyl diphospho-N-acetyl-alpha-D-muramoyl-L-alanyl-D-glutamyl-meso-2,6-diaminopimeloyl-D-alanyl-D-alanine + UMP. The protein operates within cell wall biogenesis; peptidoglycan biosynthesis. Its function is as follows. Catalyzes the initial step of the lipid cycle reactions in the biosynthesis of the cell wall peptidoglycan: transfers peptidoglycan precursor phospho-MurNAc-pentapeptide from UDP-MurNAc-pentapeptide onto the lipid carrier undecaprenyl phosphate, yielding undecaprenyl-pyrophosphoryl-MurNAc-pentapeptide, known as lipid I. This Borreliella afzelii (strain PKo) (Borrelia afzelii) protein is Phospho-N-acetylmuramoyl-pentapeptide-transferase.